Consider the following 507-residue polypeptide: Putative UDP-glucuronosyltransferase ugt-60 (507 aa).

The N-terminal stretch at 1-15 is a signal peptide; that stretch reads MYLPIFCIFLSVVDS. The N-linked (GlcNAc...) asparagine glycan is linked to asparagine 312. A helical transmembrane segment spans residues 379 to 399; that stretch reads YNSFLEAAQAGIPAVLMPLFA.

This sequence belongs to the UDP-glycosyltransferase family.

It localises to the membrane. It catalyses the reaction glucuronate acceptor + UDP-alpha-D-glucuronate = acceptor beta-D-glucuronoside + UDP + H(+). The polypeptide is Putative UDP-glucuronosyltransferase ugt-60 (ugt-60) (Caenorhabditis elegans).